A 415-amino-acid polypeptide reads, in one-letter code: Serine hydroxymethyltransferase (415 aa).

(6S)-5,6,7,8-tetrahydrofolate-binding positions include Leu117 and 121–123 (GHL). The residue at position 226 (Lys226) is an N6-(pyridoxal phosphate)lysine. (6S)-5,6,7,8-tetrahydrofolate contacts are provided by residues Glu241 and 349–351 (SPF).

The protein belongs to the SHMT family. Homodimer. Requires pyridoxal 5'-phosphate as cofactor.

Its subcellular location is the cytoplasm. The catalysed reaction is (6R)-5,10-methylene-5,6,7,8-tetrahydrofolate + glycine + H2O = (6S)-5,6,7,8-tetrahydrofolate + L-serine. The protein operates within one-carbon metabolism; tetrahydrofolate interconversion. It functions in the pathway amino-acid biosynthesis; glycine biosynthesis; glycine from L-serine: step 1/1. Functionally, catalyzes the reversible interconversion of serine and glycine with tetrahydrofolate (THF) serving as the one-carbon carrier. This reaction serves as the major source of one-carbon groups required for the biosynthesis of purines, thymidylate, methionine, and other important biomolecules. Also exhibits THF-independent aldolase activity toward beta-hydroxyamino acids, producing glycine and aldehydes, via a retro-aldol mechanism. The polypeptide is Serine hydroxymethyltransferase (Geobacter sulfurreducens (strain ATCC 51573 / DSM 12127 / PCA)).